The following is a 437-amino-acid chain: 3-ketoacyl-CoA thiolase (437 aa).

Residue C99 is the Acyl-thioester intermediate of the active site. Residues H392 and C422 each act as proton acceptor in the active site.

This sequence belongs to the thiolase-like superfamily. Thiolase family. As to quaternary structure, heterotetramer of two alpha chains (FadJ) and two beta chains (FadI).

It is found in the cytoplasm. It carries out the reaction an acyl-CoA + acetyl-CoA = a 3-oxoacyl-CoA + CoA. Its pathway is lipid metabolism; fatty acid beta-oxidation. Its function is as follows. Catalyzes the final step of fatty acid oxidation in which acetyl-CoA is released and the CoA ester of a fatty acid two carbons shorter is formed. The polypeptide is 3-ketoacyl-CoA thiolase (Pectobacterium carotovorum subsp. carotovorum (strain PC1)).